The following is a 432-amino-acid chain: Pentatricopeptide repeat-containing protein 2, mitochondrial (432 aa).

Residues 1-33 (MQFIKRTFPRRAFVDLLLNRFCLREFATTYSVS) constitute a mitochondrion transit peptide. PPR repeat units lie at residues 108–142 (KTVA…QQKP), 143–179 (SDHT…VTAS), 360–394 (NLQV…GPFP), and 395–429 (TQQT…NVPV).

It is found in the mitochondrion. Its function is as follows. Mitochondrial RNA-binding protein that acts as a general translation factor. Plays a critical role in the synthesis of all mitochondrial DNA-encoded oxidative phosphorylation subunits, which are essential for mitochondrial respiration. Essential for the expression of iron-sulfur cluster (ISC) proteins as well as other heme proteins related to iron-sensing, and thus plays a key role in iron homeostasis. This chain is Pentatricopeptide repeat-containing protein 2, mitochondrial, found in Schizosaccharomyces pombe (strain 972 / ATCC 24843) (Fission yeast).